A 192-amino-acid chain; its full sequence is UPF0149 protein Spro_3920 (192 aa).

This sequence belongs to the UPF0149 family.

This chain is UPF0149 protein Spro_3920, found in Serratia proteamaculans (strain 568).